The primary structure comprises 205 residues: Putative 3-methyladenine DNA glycosylase (205 aa).

Belongs to the DNA glycosylase MPG family.

The protein is Putative 3-methyladenine DNA glycosylase of Mycolicibacterium paratuberculosis (strain ATCC BAA-968 / K-10) (Mycobacterium paratuberculosis).